The sequence spans 25 residues: C-type natriuretic peptide (25 aa).

The cysteines at positions 9 and 25 are disulfide-linked.

In terms of tissue distribution, venom gland.

It is found in the secreted. Its function is as follows. Snake venom natriuretic peptide that has a vasorelaxant activity in rat aortic strips and a diuretic potency in anesthetized rats. May act by activating natriuretic receptors (NPR1 and/or NPR2). In Crotalus atrox (Western diamondback rattlesnake), this protein is C-type natriuretic peptide.